The chain runs to 215 residues: Cytochrome c biogenesis ATP-binding export protein CcmA (215 aa).

Residues 12-215 (LAAHALTYSR…TRLLHLQKAP (204 aa)) form the ABC transporter domain. Residue 44–51 (GPNGIGKT) coordinates ATP.

This sequence belongs to the ABC transporter superfamily. CcmA exporter (TC 3.A.1.107) family. As to quaternary structure, the complex is composed of two ATP-binding proteins (CcmA) and two transmembrane proteins (CcmB).

Its subcellular location is the cell inner membrane. It catalyses the reaction heme b(in) + ATP + H2O = heme b(out) + ADP + phosphate + H(+). Its function is as follows. Part of the ABC transporter complex CcmAB involved in the biogenesis of c-type cytochromes; once thought to export heme, this seems not to be the case, but its exact role is uncertain. Responsible for energy coupling to the transport system. This Xylella fastidiosa (strain Temecula1 / ATCC 700964) protein is Cytochrome c biogenesis ATP-binding export protein CcmA.